Reading from the N-terminus, the 905-residue chain is Alanine--tRNA ligase (905 aa).

The Zn(2+) site is built by H569, H573, C693, and H697.

It belongs to the class-II aminoacyl-tRNA synthetase family. Zn(2+) serves as cofactor.

It localises to the cytoplasm. The catalysed reaction is tRNA(Ala) + L-alanine + ATP = L-alanyl-tRNA(Ala) + AMP + diphosphate. Its function is as follows. Catalyzes the attachment of alanine to tRNA(Ala) in a two-step reaction: alanine is first activated by ATP to form Ala-AMP and then transferred to the acceptor end of tRNA(Ala). Also edits incorrectly charged Ser-tRNA(Ala) and Gly-tRNA(Ala) via its editing domain. This chain is Alanine--tRNA ligase, found in Roseiflexus sp. (strain RS-1).